A 274-amino-acid chain; its full sequence is MAHYFVGDVQGCFAELKRLLAEVDFNPSRDELWAVGDLVARGPDSLATLRYFQSLGDAGKTVLGNHDLHLLALHGKLKRDKPSDNLAPLLNAPDIASLIDWLRQQPLMRELPEHKVIMTHAGVPPQWSLDVLRQESQLVSQALKQSDYLEALISQMYSDTAERWDPSAIGLNRLRFCINALTRMRYLYVDGHLDFDCKQPPEDCSNPQLRPWFEFTSALRQSHTLVFGHWAALMGKVNDPKLKALDTGCCWGEYLTLWHLEKDQKITQKKLKKG.

Belongs to the Ap4A hydrolase family.

It catalyses the reaction P(1),P(4)-bis(5'-adenosyl) tetraphosphate + H2O = 2 ADP + 2 H(+). Functionally, hydrolyzes diadenosine 5',5'''-P1,P4-tetraphosphate to yield ADP. This chain is Bis(5'-nucleosyl)-tetraphosphatase, symmetrical, found in Shewanella sp. (strain MR-7).